A 164-amino-acid polypeptide reads, in one-letter code: ATP synthase subunit b (164 aa).

The chain crosses the membrane as a helical span at residues 6–26 (GELVGNFILVTGSVIVLLLLI).

Belongs to the ATPase B chain family. In terms of assembly, F-type ATPases have 2 components, F(1) - the catalytic core - and F(0) - the membrane proton channel. F(1) has five subunits: alpha(3), beta(3), gamma(1), delta(1), epsilon(1). F(0) has three main subunits: a(1), b(2) and c(10-14). The alpha and beta chains form an alternating ring which encloses part of the gamma chain. F(1) is attached to F(0) by a central stalk formed by the gamma and epsilon chains, while a peripheral stalk is formed by the delta and b chains.

The protein resides in the cell membrane. Its function is as follows. F(1)F(0) ATP synthase produces ATP from ADP in the presence of a proton or sodium gradient. F-type ATPases consist of two structural domains, F(1) containing the extramembraneous catalytic core and F(0) containing the membrane proton channel, linked together by a central stalk and a peripheral stalk. During catalysis, ATP synthesis in the catalytic domain of F(1) is coupled via a rotary mechanism of the central stalk subunits to proton translocation. Component of the F(0) channel, it forms part of the peripheral stalk, linking F(1) to F(0). This is ATP synthase subunit b from Streptococcus pyogenes serotype M12 (strain MGAS2096).